Consider the following 103-residue polypeptide: Large ribosomal subunit protein bL21 (103 aa).

This sequence belongs to the bacterial ribosomal protein bL21 family. Part of the 50S ribosomal subunit. Contacts protein L20.

This protein binds to 23S rRNA in the presence of protein L20. In Tolumonas auensis (strain DSM 9187 / NBRC 110442 / TA 4), this protein is Large ribosomal subunit protein bL21.